We begin with the raw amino-acid sequence, 304 residues long: Nod factor export ATP-binding protein I (304 aa).

An ABC transporter domain is found at 6 to 236; sequence IDLAGVKKSF…HIGCQVIEIF (231 aa). Residue 38 to 45 coordinates ATP; sequence GPNGAGKS.

Belongs to the ABC transporter superfamily. Lipooligosaccharide exporter (TC 3.A.1.102) family. The complex is composed of two ATP-binding proteins (NodI) and two transmembrane proteins (NodJ).

Its subcellular location is the cell inner membrane. Its function is as follows. Part of the ABC transporter complex NodIJ involved in the export of the nodulation factors (Nod factors), the bacterial signal molecules that induce symbiosis and subsequent nodulation induction. Nod factors are LCO (lipo-chitin oligosaccharide), a modified beta-1,4-linked N-acetylglucosamine oligosaccharide. This subunit is responsible for energy coupling to the transport system. In Rhizobium sp. (strain N33), this protein is Nod factor export ATP-binding protein I.